Here is a 179-residue protein sequence, read N- to C-terminus: Ubiquitin-conjugating enzyme E2 C (179 aa).

Residues 1 to 31 (MASQNVDPAAASSVASRKGQESGTSAARGSV) form a disordered region. In terms of domain architecture, UBC core spans 30-179 (SVGKRLQQEL…YQKQVREKEI (150 aa)). The active-site Glycyl thioester intermediate is Cys114.

Belongs to the ubiquitin-conjugating enzyme family. In terms of assembly, component of the APC/C complex. In terms of processing, autoubiquitinated by the APC/C complex, leading to its degradation by the proteasome.

The enzyme catalyses S-ubiquitinyl-[E1 ubiquitin-activating enzyme]-L-cysteine + [E2 ubiquitin-conjugating enzyme]-L-cysteine = [E1 ubiquitin-activating enzyme]-L-cysteine + S-ubiquitinyl-[E2 ubiquitin-conjugating enzyme]-L-cysteine.. It catalyses the reaction S-ubiquitinyl-[E1 ubiquitin-activating enzyme]-L-cysteine + [acceptor protein]-L-lysine = [E1 ubiquitin-activating enzyme]-L-cysteine + N(6)-monoubiquitinyl-[acceptor protein]-L-lysine.. It functions in the pathway protein modification; protein ubiquitination. Catalyzes the covalent attachment of ubiquitin to other proteins. Acts as an essential factor of the anaphase promoting complex/cyclosome (APC/C), a cell cycle-regulated ubiquitin ligase that controls progression through mitosis. Acts by initiating 'Lys-11'-linked polyubiquitin chains on APC/C substrates, leading to the degradation of APC/C substrates by the proteasome and promoting mitotic exit. This Xenopus laevis (African clawed frog) protein is Ubiquitin-conjugating enzyme E2 C (ube2c).